The primary structure comprises 632 residues: Cleavage stimulation factor subunit 2 tau variant (632 aa).

One can recognise an RRM domain in the interval 16-94 (RSVFVGNIPY…RALRVDNAAS (79 aa)). 2 disordered regions span residues 201–296 (IPGK…PGGA) and 365–433 (YMGP…TRPM). Positions 213–233 (PGGPGPSGPGGPGPGPAPGLC) are enriched in pro residues. Residues 234-244 (PGPNVMLNQQN) are compositionally biased toward low complexity. A compositionally biased stretch (pro residues) spans 275 to 287 (APGPIPAAVPGPG). A compositionally biased stretch (low complexity) spans 365 to 375 (YMGPPHQGPPM). 2 stretches are compositionally biased toward basic and acidic residues: residues 377–390 (HGHDNRGPASHDMR) and 420–433 (RGGRESRGMETRPM). The 1-1; approximate repeat unit spans residues 428–432 (METRP). The 8 X 5 AA tandem repeats of M-E-T-R-[AG] stretch occupies residues 428-466 (METRPMETEVLEPRGMERRMETCAMETRGMDARGLEMRG). Residues 433–437 (METEV) form a 1-2; approximate repeat. A 1-3; approximate repeat occupies 438 to 442 (LEPRG). One copy of the 1-4; approximate repeat lies at 443–446 (MERR). One copy of the 1-5; approximate repeat lies at 447 to 451 (METCA). The 1-6 repeat unit spans residues 452-456 (METRG). One copy of the 1-7; approximate repeat lies at 457 to 461 (MDARG). One copy of the 1-8; approximate repeat lies at 462–466 (LEMRG). A 2-1; approximate repeat occupies 508 to 512 (GGTMQ). Residues 508 to 565 (GGTMQGAGIQGGGMQGAGMQGGGMQGAGMQGGGMQGAGMQAGMQGASMQGGMQGAGMQ) form a 12 X 5 AA tandem repeats of G-[AT]-G-[MI]-Q region. The 2-2 repeat unit spans residues 513–517 (GAGIQ). One copy of the 2-3; approximate repeat lies at 518–522 (GGGMQ). Residues 519 to 543 (GGMQGAGMQGGGMQGAGMQGGGMQG) show a composition bias toward gly residues. Residues 519–590 (GGMQGAGMQG…GQSQVTPQDQ (72 aa)) form a disordered region. One copy of the 2-4 repeat lies at 523–527 (GAGMQ). Residues 528-532 (GGGMQ) form a 2-5; approximate repeat. A 2-6 repeat occupies 533–537 (GAGMQ). The 2-7; approximate repeat unit spans residues 538 to 542 (GGGMQ). One copy of the 2-8 repeat lies at 543–547 (GAGMQ). Residues 544-557 (AGMQAGMQGASMQG) are compositionally biased toward low complexity. A 2-9; approximate repeat occupies 548–551 (AGMQ). One copy of the 2-10; approximate repeat lies at 552–556 (GASMQ). Residues 557 to 560 (GGMQ) form a 2-11; approximate repeat. Residues 558-574 (GMQGAGMQGASKQGGGQ) are compositionally biased toward gly residues. The 2-12 repeat unit spans residues 561–565 (GAGMQ). A compositionally biased stretch (low complexity) spans 575–584 (PSSFSPGQSQ). Ser579 bears the Phosphoserine mark.

Expressed in testes, where it is restricted to pachytene spermatocytes and spermatids, and in the brain (at protein level).

It localises to the nucleus. May play a significant role in AAUAAA-independent mRNA polyadenylation in germ cells. Directly involved in the binding to pre-mRNAs. This is Cleavage stimulation factor subunit 2 tau variant (Cstf2t) from Mus musculus (Mouse).